The primary structure comprises 64 residues: Large ribosomal subunit protein uL29 (64 aa).

Belongs to the universal ribosomal protein uL29 family.

This Pseudomonas entomophila (strain L48) protein is Large ribosomal subunit protein uL29.